Reading from the N-terminus, the 526-residue chain is Triacylglycerol lipase OBL1 (526 aa).

The helical transmembrane segment at 79-99 (GHLTDFLLNFYYQNHGFLGIL) threads the bilayer. The GXSXG motif lies at 338 to 342 (GHSLG). Ser-340 functions as the Nucleophile in the catalytic mechanism. Active-site charge relay system residues include Asp-404 and His-497.

Belongs to the AB hydrolase superfamily. Lipase family.

Its subcellular location is the membrane. The catalysed reaction is a triacylglycerol + H2O = a diacylglycerol + a fatty acid + H(+). Its function is as follows. Acid lipase that can hydrolyze a range of triacylglycerols but is not active on phospholipids. In vitro, hydrolyzes triolein, trilinolein, triricinolein, tripalmitin, trilaurin and tricaprin. May play a role in the regulation of lipolysis in germinating seeds. In Ricinus communis (Castor bean), this protein is Triacylglycerol lipase OBL1.